Here is a 767-residue protein sequence, read N- to C-terminus: Photosystem I P700 chlorophyll a apoprotein A1 (767 aa).

A run of 8 helical transmembrane segments spans residues 72–95 (IFSA…FHGA), 158–181 (LMSL…FHYH), 197–221 (LNHH…HVSL), 305–323 (IAHH…GHMY), 364–387 (WHAQ…QHMY), 403–429 (IGLF…IAMI), 451–473 (AIIS…LYVH), and 548–566 (FMVH…LILL). [4Fe-4S] cluster-binding residues include Cys-590 and Cys-599. 2 helical membrane passes run 606-627 (HVFL…HFSW) and 681-703 (TSAY…MFLF). Chlorophyll a' is bound at residue His-692. Chlorophyll a-binding residues include Met-700 and Tyr-708. Trp-709 is a phylloquinone binding site. A helical membrane pass occupies residues 741–761 (AVGVAHYLLGGIATTWAFFHA).

The protein belongs to the PsaA/PsaB family. In terms of assembly, the PsaA/B heterodimer binds the P700 chlorophyll special pair and subsequent electron acceptors. PSI consists of a core antenna complex that captures photons, and an electron transfer chain that converts photonic excitation into a charge separation. The cyanobacterial PSI reaction center is composed of one copy each of PsaA,B,C,D,E,F,I,J,K,L,M and X, and forms trimeric complexes. The cofactor is PSI electron transfer chain: 5 chlorophyll a, 1 chlorophyll a', 2 phylloquinones and 3 4Fe-4S clusters. PSI core antenna: 90 chlorophyll a, 22 carotenoids, 3 phospholipids and 1 galactolipid. P700 is a chlorophyll a/chlorophyll a' dimer, A0 is one or more chlorophyll a, A1 is one or both phylloquinones and FX is a shared 4Fe-4S iron-sulfur center..

It is found in the cellular thylakoid membrane. The enzyme catalyses reduced [plastocyanin] + hnu + oxidized [2Fe-2S]-[ferredoxin] = oxidized [plastocyanin] + reduced [2Fe-2S]-[ferredoxin]. Its function is as follows. PsaA and PsaB bind P700, the primary electron donor of photosystem I (PSI), as well as the electron acceptors A0, A1 and FX. PSI is a plastocyanin/cytochrome c6-ferredoxin oxidoreductase, converting photonic excitation into a charge separation, which transfers an electron from the donor P700 chlorophyll pair to the spectroscopically characterized acceptors A0, A1, FX, FA and FB in turn. Oxidized P700 is reduced on the lumenal side of the thylakoid membrane by plastocyanin or cytochrome c6. The protein is Photosystem I P700 chlorophyll a apoprotein A1 of Synechococcus sp. (strain CC9311).